The primary structure comprises 181 residues: ATP synthase subunit b 2 (181 aa).

Residues 1-18 (MATTTHDAGHGAAEAAHG) show a composition bias toward low complexity. A disordered region spans residues 1–20 (MATTTHDAGHGAAEAAHGSS). The helical transmembrane segment at 34 to 54 (IFWLLVTLVVIYLILSRIALP) threads the bilayer.

The protein belongs to the ATPase B chain family. In terms of assembly, F-type ATPases have 2 components, F(1) - the catalytic core - and F(0) - the membrane proton channel. F(1) has five subunits: alpha(3), beta(3), gamma(1), delta(1), epsilon(1). F(0) has three main subunits: a(1), b(2) and c(10-14). The alpha and beta chains form an alternating ring which encloses part of the gamma chain. F(1) is attached to F(0) by a central stalk formed by the gamma and epsilon chains, while a peripheral stalk is formed by the delta and b chains.

It localises to the cell inner membrane. In terms of biological role, f(1)F(0) ATP synthase produces ATP from ADP in the presence of a proton or sodium gradient. F-type ATPases consist of two structural domains, F(1) containing the extramembraneous catalytic core and F(0) containing the membrane proton channel, linked together by a central stalk and a peripheral stalk. During catalysis, ATP synthesis in the catalytic domain of F(1) is coupled via a rotary mechanism of the central stalk subunits to proton translocation. Functionally, component of the F(0) channel, it forms part of the peripheral stalk, linking F(1) to F(0). The b'-subunit is a diverged and duplicated form of b found in plants and photosynthetic bacteria. This Ruegeria sp. (strain TM1040) (Silicibacter sp.) protein is ATP synthase subunit b 2 (atpF2).